Consider the following 1028-residue polypeptide: Contactin-6 (1028 aa).

A signal peptide spans 1-19; that stretch reads MRLLWKLVILLPLINSCAG. 6 Ig-like C2-type domains span residues 32-117, 122-208, 227-308, 318-402, 408-495, and 499-587; these read PQDV…AKLQ, EDFE…RSVQ, PKIE…RNLA, PEWE…AELR, PDFS…GSLI, and RTVI…ERLS. 6 cysteine pairs are disulfide-bonded: C50/C100, C144/C196, C249/C297, C339/C386, C431/C479, and C521/C577. 2 N-linked (GlcNAc...) asparagine glycosylation sites follow: N65 and N193. N368, N377, and N468 each carry an N-linked (GlcNAc...) asparagine glycan. Fibronectin type-III domains follow at residues 600–698, 703–800, 805–901, and 902–996; these read PPED…TKAS, APVN…SGED, APRG…TKKS, and PPSQ…KMSS. 4 N-linked (GlcNAc...) asparagine glycosylation sites follow: N659, N765, N860, and N865. Y882 carries the phosphotyrosine modification. Residues 887-902 show a composition bias toward polar residues; sequence TGPSSPPVNVTTKKSP. Positions 887–908 are disordered; the sequence is TGPSSPPVNVTTKKSPPSQPPA. N-linked (GlcNAc...) asparagine glycosylation is found at N895, N931, N956, and N957. A lipid anchor (GPI-anchor amidated serine) is attached at S999. A propeptide spans 1000 to 1028 (removed in mature form); that stretch reads VGVQILKPSTQFLTMVGFFYCFVIQPLSR.

This sequence belongs to the immunoglobulin superfamily. Contactin family. In terms of assembly, interacts with PTPRG. Specifically expressed in neuronal cells. In brain, it is expressed in spinal cord, cerebrum and cerebellum. At 17 dpc, it is expressed in hippocampus, cerebellum, and the brain stem. Strongly expressed after birth with a maximum level between P1 and P21, which corresponds to the time frame of oligodendrogliogenesis.

It is found in the cell membrane. In terms of biological role, contactins mediate cell surface interactions during nervous system development. Participates in oligodendrocytes generation by acting as a ligand of NOTCH1. Its association with NOTCH1 promotes NOTCH1 activation through the released notch intracellular domain (NICD) and subsequent translocation to the nucleus. May be involved in motor coordination. The polypeptide is Contactin-6 (Cntn6) (Rattus norvegicus (Rat)).